The following is a 72-amino-acid chain: Translation initiation factor IF-1 (72 aa).

The 72-residue stretch at 1-72 (MAKEDCIEME…SKGRIIYRAR (72 aa)) folds into the S1-like domain.

Belongs to the IF-1 family. Component of the 30S ribosomal translation pre-initiation complex which assembles on the 30S ribosome in the order IF-2 and IF-3, IF-1 and N-formylmethionyl-tRNA(fMet); mRNA recruitment can occur at any time during PIC assembly.

It is found in the cytoplasm. One of the essential components for the initiation of protein synthesis. Stabilizes the binding of IF-2 and IF-3 on the 30S subunit to which N-formylmethionyl-tRNA(fMet) subsequently binds. Helps modulate mRNA selection, yielding the 30S pre-initiation complex (PIC). Upon addition of the 50S ribosomal subunit IF-1, IF-2 and IF-3 are released leaving the mature 70S translation initiation complex. The polypeptide is Translation initiation factor IF-1 (Pseudoalteromonas atlantica (strain T6c / ATCC BAA-1087)).